The sequence spans 469 residues: Uronate isomerase (469 aa).

It belongs to the metallo-dependent hydrolases superfamily. Uronate isomerase family.

It carries out the reaction D-glucuronate = D-fructuronate. The catalysed reaction is aldehydo-D-galacturonate = keto-D-tagaturonate. It functions in the pathway carbohydrate metabolism; pentose and glucuronate interconversion. This Yersinia pseudotuberculosis serotype O:1b (strain IP 31758) protein is Uronate isomerase.